The following is a 352-amino-acid chain: Popeye domain-containing protein 1 (352 aa).

Over 1–38 (MSNTTSALPSSVPAVSLDPNATLCQDWEQSHHLLFHLA) the chain is Extracellular. N-linked (GlcNAc...) asparagine glycosylation is found at N3 and N20. The chain crosses the membrane as a helical span at residues 39 to 59 (NLSLGLGFLIPTTLALHMIFL). Position 60 (R60) is a topological domain, cytoplasmic. Residues 61 to 81 (LLLMTGCSLFIAWATLYRCTL) form a helical membrane-spanning segment. A topological domain (extracellular) is located at residue D82. A helical membrane pass occupies residues 83 to 103 (VMVWNVVFLLVNFMHFFFLLY). Topologically, residues 104 to 352 (KRRPIKIDRE…NVSKTTKKDI (249 aa)) are cytoplasmic. The tract at residues 299–352 (ILRGGSTGSSLQKNPLTKTSTTMKPIEEGLEDDVFESESPTTSQNVSKTTKKDI) is disordered. Polar residues-rich tracts occupy residues 306-321 (GSSL…STTM) and 336-346 (ESPTTSQNVSK).

This sequence belongs to the popeye family. As to expression, expressed in skeletal muscle (at protein level).

It localises to the lateral cell membrane. It is found in the cell junction. The protein resides in the tight junction. Its subcellular location is the membrane. The protein localises to the cell membrane. It localises to the sarcolemma. It is found in the caveola. Cell adhesion molecule involved in the establishment and/or maintenance of cell integrity. Involved in skeletal muscle and heart development as well as in the maintenance of heart function. May play a role in vamp3-mediated vesicular transport and recycling of receptor molecules. Involved in the formation and regulation of the tight junction (TJ) paracellular permeability barrier in epithelial cells. May induce primordial adhesive contact and aggregation of epithelial cells in a Ca(2+)-independent manner. May be involved in epithelial movement during corneal sheet formation and regeneration. May play a role in the regulation of cell shape and movement by modulating the Rho-GTPase activity. May also be involved in striated muscle regeneration and in the regulation of cell spreading. The polypeptide is Popeye domain-containing protein 1 (popdc1) (Danio rerio (Zebrafish)).